Consider the following 388-residue polypeptide: Arginine biosynthesis bifunctional protein ArgJ (388 aa).

T150, K172, T183, E263, N383, and S388 together coordinate substrate. T183 serves as the catalytic Nucleophile.

This sequence belongs to the ArgJ family. As to quaternary structure, heterotetramer of two alpha and two beta chains.

Its subcellular location is the cytoplasm. It carries out the reaction N(2)-acetyl-L-ornithine + L-glutamate = N-acetyl-L-glutamate + L-ornithine. The enzyme catalyses L-glutamate + acetyl-CoA = N-acetyl-L-glutamate + CoA + H(+). It participates in amino-acid biosynthesis; L-arginine biosynthesis; L-ornithine and N-acetyl-L-glutamate from L-glutamate and N(2)-acetyl-L-ornithine (cyclic): step 1/1. The protein operates within amino-acid biosynthesis; L-arginine biosynthesis; N(2)-acetyl-L-ornithine from L-glutamate: step 1/4. Its function is as follows. Catalyzes two activities which are involved in the cyclic version of arginine biosynthesis: the synthesis of N-acetylglutamate from glutamate and acetyl-CoA as the acetyl donor, and of ornithine by transacetylation between N(2)-acetylornithine and glutamate. In Corynebacterium glutamicum (strain ATCC 13032 / DSM 20300 / JCM 1318 / BCRC 11384 / CCUG 27702 / LMG 3730 / NBRC 12168 / NCIMB 10025 / NRRL B-2784 / 534), this protein is Arginine biosynthesis bifunctional protein ArgJ.